Consider the following 125-residue polypeptide: Small ribosomal subunit protein uS13 (125 aa).

The disordered stretch occupies residues 93–125 (RSLPVRGQRTRTNARTRKGKRKTVAGKKKAGKK).

The protein belongs to the universal ribosomal protein uS13 family. In terms of assembly, part of the 30S ribosomal subunit. Forms a loose heterodimer with protein S19. Forms two bridges to the 50S subunit in the 70S ribosome.

In terms of biological role, located at the top of the head of the 30S subunit, it contacts several helices of the 16S rRNA. In the 70S ribosome it contacts the 23S rRNA (bridge B1a) and protein L5 of the 50S subunit (bridge B1b), connecting the 2 subunits; these bridges are implicated in subunit movement. Contacts the tRNAs in the A and P-sites. The polypeptide is Small ribosomal subunit protein uS13 (Chlorobaculum tepidum (strain ATCC 49652 / DSM 12025 / NBRC 103806 / TLS) (Chlorobium tepidum)).